Reading from the N-terminus, the 296-residue chain is MSKRTREESEMEAGPSTASPGVSVSPAPALTAGEVQLLKVPQKRFYRQRAHANVFIDHELDYPKRPELMDWSTHYPAYFSQPNEDGTITQGEKKVEWADVGCGFGGLLMALAPLFPEKLMLGMEIRTSVTKYVTDRIAATRQAQSLLPADSVDTKPGGYQNVSVIKANSMKHMPNFFAKGQLEKIFFLFPDPHFKNRKHKARIITPALLAEYAYVLRPGGILYTVTDVKDLHEWMAHHLHAHPLFEYIPTETLSDDPILEAARTATEEGQKVERNKGDKWVACFRRKEDPKEEDED.

A disordered region spans residues 1–26; that stretch reads MSKRTREESEMEAGPSTASPGVSVSP. S-adenosyl-L-methionine-binding positions include glycine 101, 124–125, 168–169, and leucine 188; these read EI and NS. Residue aspartate 191 is part of the active site. 266-268 contributes to the S-adenosyl-L-methionine binding site; it reads TEE.

Belongs to the class I-like SAM-binding methyltransferase superfamily. TrmB family. In terms of assembly, forms a complex with TRM82.

The protein localises to the nucleus. It carries out the reaction guanosine(46) in tRNA + S-adenosyl-L-methionine = N(7)-methylguanosine(46) in tRNA + S-adenosyl-L-homocysteine. Its pathway is tRNA modification; N(7)-methylguanine-tRNA biosynthesis. Catalyzes the formation of N(7)-methylguanine at position 46 (m7G46) in tRNA. In Cryptococcus neoformans var. neoformans serotype D (strain JEC21 / ATCC MYA-565) (Filobasidiella neoformans), this protein is tRNA (guanine-N(7)-)-methyltransferase.